A 202-amino-acid chain; its full sequence is uncharacterized protein (202 aa).

This is an uncharacterized protein from Pseudanabaena tenuis (strain PCC 7409).